The primary structure comprises 365 residues: Chorismate synthase (365 aa).

Positions 48 and 54 each coordinate NADP(+). FMN contacts are provided by residues Arg-131 to Ser-133, Asn-243 to Ala-244, Gly-288, Lys-303 to Ser-307, and Arg-329.

The protein belongs to the chorismate synthase family. Homotetramer. FMNH2 serves as cofactor.

The enzyme catalyses 5-O-(1-carboxyvinyl)-3-phosphoshikimate = chorismate + phosphate. It functions in the pathway metabolic intermediate biosynthesis; chorismate biosynthesis; chorismate from D-erythrose 4-phosphate and phosphoenolpyruvate: step 7/7. Functionally, catalyzes the anti-1,4-elimination of the C-3 phosphate and the C-6 proR hydrogen from 5-enolpyruvylshikimate-3-phosphate (EPSP) to yield chorismate, which is the branch point compound that serves as the starting substrate for the three terminal pathways of aromatic amino acid biosynthesis. This reaction introduces a second double bond into the aromatic ring system. The protein is Chorismate synthase of Rhizobium etli (strain ATCC 51251 / DSM 11541 / JCM 21823 / NBRC 15573 / CFN 42).